The chain runs to 430 residues: Tol-Pal system protein TolB (430 aa).

The first 21 residues, 1–21, serve as a signal peptide directing secretion; that stretch reads MKQALRVAFGFLILWASVLHA.

It belongs to the TolB family. In terms of assembly, the Tol-Pal system is composed of five core proteins: the inner membrane proteins TolA, TolQ and TolR, the periplasmic protein TolB and the outer membrane protein Pal. They form a network linking the inner and outer membranes and the peptidoglycan layer.

It is found in the periplasm. Its function is as follows. Part of the Tol-Pal system, which plays a role in outer membrane invagination during cell division and is important for maintaining outer membrane integrity. TolB occupies a key intermediary position in the Tol-Pal system because it communicates directly with both membrane-embedded components, Pal in the outer membrane and TolA in the inner membrane. In Shigella dysenteriae serotype 1 (strain Sd197), this protein is Tol-Pal system protein TolB.